Consider the following 1188-residue polypeptide: uncharacterized protein (1188 aa).

The next 3 membrane-spanning stretches (helical) occupy residues 73-93 (FVVNYATVPMFMSASFCHLLM), 878-898 (IFSVFIYYECNLVLFSGDSGI), and 1089-1109 (VIPLFLLCGTEGQIYIISEFI).

It is found in the membrane. This is an uncharacterized protein from Saccharomyces cerevisiae (strain ATCC 204508 / S288c) (Baker's yeast).